We begin with the raw amino-acid sequence, 161 residues long: C-type natriuretic peptide (161 aa).

A signal peptide spans 1–22 (MFASRLAALGLLLLALVLDGKP). Positions 19–135 (DGKPAPPPQP…GGGGSRRLKG (117 aa)) are disordered. Residues 23 to 139 (APPPQPLRKA…SRRLKGLPKK (117 aa)) constitute a propeptide that is removed on maturation. Low complexity-rich tracts occupy residues 29–60 (LRKAPAGGTTALQRQLTEQQQQQQQAEGSSGP) and 76–93 (AAPTAPKSKGAAASAASR). A compositionally biased stretch (basic and acidic residues) spans 94 to 104 (LLRDLRPDGKQ). The segment covering 120–130 (GGGGGGGGGGS) has biased composition (gly residues). C145 and C161 form a disulfide bridge.

It belongs to the natriuretic peptide family. In terms of tissue distribution, expressed by the venom gland.

It is found in the secreted. In terms of biological role, snake venom natriuretic peptide that has a vasorelaxant activity in rat aortic strips and a diuretic potency in anesthetized rats. May act by activating natriuretic receptors (NPR1 and/or NPR2). This Rhabdophis tigrinus tigrinus (Tiger keelback snake) protein is C-type natriuretic peptide.